The primary structure comprises 62 residues: MVILFQLALLLLVVMSFVLIVGVPVLYATNGDRVQSNRLILVGGLAWTALVVLVGVLNYFVV.

2 helical membrane-spanning segments follow: residues 8–28 and 41–61; these read ALLLLVVMSFVLIVGVPVLYA and LVGGLAWTALVVLVGVLNYFV.

It belongs to the PsbZ family. As to quaternary structure, PSII is composed of 1 copy each of membrane proteins PsbA, PsbB, PsbC, PsbD, PsbE, PsbF, PsbH, PsbI, PsbJ, PsbK, PsbL, PsbM, PsbT, PsbX, PsbY, PsbZ, Psb30/Ycf12, peripheral proteins PsbO, CyanoQ (PsbQ), PsbU, PsbV and a large number of cofactors. It forms dimeric complexes.

The protein resides in the cellular thylakoid membrane. Functionally, may control the interaction of photosystem II (PSII) cores with the light-harvesting antenna, regulates electron flow through the 2 photosystem reaction centers. PSII is a light-driven water plastoquinone oxidoreductase, using light energy to abstract electrons from H(2)O, generating a proton gradient subsequently used for ATP formation. This is Photosystem II reaction center protein Z from Synechococcus elongatus (strain ATCC 33912 / PCC 7942 / FACHB-805) (Anacystis nidulans R2).